The sequence spans 859 residues: DNA mismatch repair protein MutS (859 aa).

Residue 618-625 (GPNMGGKS) participates in ATP binding.

This sequence belongs to the DNA mismatch repair MutS family.

This protein is involved in the repair of mismatches in DNA. It is possible that it carries out the mismatch recognition step. This protein has a weak ATPase activity. The sequence is that of DNA mismatch repair protein MutS from Shewanella halifaxensis (strain HAW-EB4).